The following is a 447-amino-acid chain: Ribulose bisphosphate carboxylase large chain (447 aa).

N6,N6,N6-trimethyllysine is present on Lys5. Substrate-binding residues include Asn114 and Thr164. Lys166 (proton acceptor) is an active-site residue. Residue Lys168 participates in substrate binding. 3 residues coordinate Mg(2+): Lys192, Asp194, and Glu195. Lys192 is modified (N6-carboxylysine). Residue His285 is the Proton acceptor of the active site. Positions 286, 318, and 370 each coordinate substrate.

Belongs to the RuBisCO large chain family. Type I subfamily. In terms of assembly, heterohexadecamer of 8 large chains and 8 small chains; disulfide-linked. The disulfide link is formed within the large subunit homodimers. Requires Mg(2+) as cofactor. The disulfide bond which can form in the large chain dimeric partners within the hexadecamer appears to be associated with oxidative stress and protein turnover.

The protein resides in the plastid. It is found in the chloroplast. It catalyses the reaction 2 (2R)-3-phosphoglycerate + 2 H(+) = D-ribulose 1,5-bisphosphate + CO2 + H2O. The catalysed reaction is D-ribulose 1,5-bisphosphate + O2 = 2-phosphoglycolate + (2R)-3-phosphoglycerate + 2 H(+). Its function is as follows. RuBisCO catalyzes two reactions: the carboxylation of D-ribulose 1,5-bisphosphate, the primary event in carbon dioxide fixation, as well as the oxidative fragmentation of the pentose substrate in the photorespiration process. Both reactions occur simultaneously and in competition at the same active site. The sequence is that of Ribulose bisphosphate carboxylase large chain from Camassia leichtlinii (Western quamash).